The following is a 1321-amino-acid chain: Bile salt export pump (1321 aa).

The Cytoplasmic portion of the chain corresponds to 1–62 (MSDSVILRSV…FSSSKDIWLM (62 aa)). An ABC transmembrane type-1 1 domain is found at 62-385 (MLMGGVCALL…ASSCLEIFST (324 aa)). Residues 63-83 (LMGGVCALLHGMAQPGILIIF) form a helical membrane-spanning segment. Residues 84–147 (GIMTDIFIKY…MIKFSGIYAG (64 aa)) are Extracellular-facing. N-linked (GlcNAc...) asparagine glycosylation is found at Asn109, Asn116, Asn122, and Asn125. A helical transmembrane segment spans residues 148–168 (VGMTVLILGYFQIRLWVITGA). Residues 169-215 (RQIRRMRKIYFRRIMRMEIGWFDCTSVGELNSRFADDIEKINDAIAD) are Cytoplasmic-facing. The chain crosses the membrane as a helical span at residues 216–236 (QLAHFLQRMSTAMCGLLLGFY). At 237–240 (RGWK) the chain is on the extracellular side. Residues 241 to 261 (LTLVILAVSPLIGIGAAVIGL) traverse the membrane as a helical segment. At 262-319 (SIAKFTELELKAYAKAGSIADEVLSSIRTVAAFGGENKEVERYEKNLVFAQRWGIWKG) the chain is on the cytoplasmic side. A helical transmembrane segment spans residues 320 to 340 (MVMGFFTGYMWCLIFFCYALA). Topologically, residues 341 to 353 (FWYGSTLVLDEEE) are extracellular. A helical transmembrane segment spans residues 354–374 (YTPGTLVQIFLCVILAAMNIG). The Cytoplasmic segment spans residues 375–755 (HASSCLEIFS…KYNIPEWHYI (381 aa)). One can recognise an ABC transporter 1 domain in the interval 420–656 (IEFHNVTFHY…KGVYFMLVTL (237 aa)). 455 to 462 (GSSGAGKS) contributes to the ATP binding site. The residue at position 586 (Thr586) is a Phosphothreonine. Ser587 bears the Phosphoserine mark. The segment at 651-674 (FMLVTLQSQGDNAHKETSIMGKDA) is interaction with HAX1. Phosphoserine occurs at positions 692, 703, and 706. In terms of domain architecture, ABC transmembrane type-1 2 spans 755–1043 (ILVGSLSAAI…TFSYTPSYAK (289 aa)). A helical membrane pass occupies residues 756–776 (LVGSLSAAINGAVTPIYSLLF). Topologically, residues 777–794 (SQLLGTFSLLDKEQQRSE) are extracellular. The chain crosses the membrane as a helical span at residues 795 to 815 (IHSMCLFFVILGCVSIFTQFL). Topologically, residues 816–869 (QGYTFAKSGELLTKRLRKFGFKAMLGQDIGWFDDLRNNPGVLTTRLATDASQVQ) are cytoplasmic. 2 consecutive transmembrane segments (helical) span residues 870–890 (GATG…IAAL) and 891–911 (LIAF…FPFL). Residues 912 to 979 (ALSGAVQTKM…SYKTAVRKAN (68 aa)) are Cytoplasmic-facing. A helical membrane pass occupies residues 980–1000 (IYGLCFAFSQGIAFLANSAAY). At 1001–1011 (RYGGYLIAYEG) the chain is on the extracellular side. A helical membrane pass occupies residues 1012–1032 (LGFSHVFRVVSSVALSATAVG). The Cytoplasmic segment spans residues 1033–1321 (RTFSYTPSYA…KLVITGAPIS (289 aa)). Residues 1078-1316 (IDFIDCKFTY…KGAYYKLVIT (239 aa)) form the ABC transporter 2 domain. 1113–1120 (GSSGCGKS) provides a ligand contact to ATP. Residue Ser1321 is modified to Phosphoserine.

It belongs to the ABC transporter superfamily. ABCB family. Multidrug resistance exporter (TC 3.A.1.201) subfamily. Interacts with HAX1. Interacts with the adapter protein complex 2 (AP-2) throught AP2A2 or AP2A1; this interaction regulates cell membrane expression of ABCB11 through its internalization in a clathrin-dependent manner and its subsequent degradation. In terms of processing, ubiquitinated; short-chain ubiquitination regulates cell-Surface expression of ABCB11. Post-translationally, N-glycosylated. As to expression, expressed predominantly, if not exclusively in the liver, where it was further localized to the canalicular microvilli and to subcanalicular vesicles of the hepatocytes by in situ.

It is found in the apical cell membrane. It localises to the recycling endosome membrane. The protein localises to the endosome. Its subcellular location is the cell membrane. The enzyme catalyses cholate(in) + ATP + H2O = cholate(out) + ADP + phosphate + H(+). It carries out the reaction taurocholate(in) + ATP + H2O = taurocholate(out) + ADP + phosphate + H(+). The catalysed reaction is glycocholate(in) + ATP + H2O = glycocholate(out) + ADP + phosphate + H(+). It catalyses the reaction glycochenodeoxycholate(in) + ATP + H2O = glycochenodeoxycholate(out) + ADP + phosphate + H(+). The enzyme catalyses taurochenodeoxycholate(in) + ATP + H2O = taurochenodeoxycholate(out) + ADP + phosphate + H(+). It carries out the reaction glycoursodeoxycholate(in) + ATP + H2O = glycoursodeoxycholate(out) + ADP + phosphate + H(+). The catalysed reaction is tauroursodeoxycholate(in) + ATP + H2O = tauroursodeoxycholate(out) + ADP + phosphate + H(+). It catalyses the reaction taurodeoxycholate(in) + ATP + H2O = taurodeoxycholate(out) + ADP + phosphate + H(+). The enzyme catalyses pravastatin(in) + ATP + H2O = pravastatin(out) + ADP + phosphate + H(+). Its activity is regulated as follows. The uptake of taurocholate is inhibited by taurolithocholate sulfate with an IC(50) of 52.9 uM. Pravastatin competitively inhibits the transport of taurocholic acid. Cyclosporin A, glibenclamide, rifampicin and troglitazonestrongly competitively inhibit the transport activity of taurocholate. The canalicular transport activity of taurocholate is strongly dependent on canalicular membrane cholesterol content. The uptake of taurocholate is increased by short- and medium-chain fatty acids. Cholesterol increases transport capacity of taurocholate without affecting the affinity for the substrate. Catalyzes the transport of the major hydrophobic bile salts, such as taurine and glycine-conjugated cholic acid across the canalicular membrane of hepatocytes in an ATP-dependent manner, therefore participates in hepatic bile acid homeostasis and consequently to lipid homeostasis through regulation of biliary lipid secretion in a bile salts dependent manner. Transports taurine-conjugated bile salts more rapidly than glycine-conjugated bile salts. Also transports non-bile acid compounds, such as pravastatin and fexofenadine in an ATP-dependent manner and may be involved in their biliary excretion. This is Bile salt export pump from Rattus norvegicus (Rat).